A 546-amino-acid chain; its full sequence is Probable protein kinase UbiB (546 aa).

Positions 124 to 502 constitute a Protein kinase domain; the sequence is DFEIKPLASA…HVRQGQSRYF (379 aa). Residues 130-138 and lysine 153 each bind ATP; that span reads LASASIAQV. The active-site Proton acceptor is the aspartate 288. A run of 2 helical transmembrane segments spans residues 501 to 521 and 522 to 542; these read YFLG…VSRP and EWGL…FVGW.

It belongs to the ABC1 family. UbiB subfamily.

The protein localises to the cell inner membrane. It participates in cofactor biosynthesis; ubiquinone biosynthesis [regulation]. Is probably a protein kinase regulator of UbiI activity which is involved in aerobic coenzyme Q (ubiquinone) biosynthesis. This is Probable protein kinase UbiB from Shigella boydii serotype 18 (strain CDC 3083-94 / BS512).